Reading from the N-terminus, the 285-residue chain is Probable endonuclease 4 (285 aa).

The Zn(2+) site is built by histidine 69, histidine 109, glutamate 145, aspartate 179, histidine 182, histidine 216, aspartate 229, histidine 231, and glutamate 261.

This sequence belongs to the AP endonuclease 2 family. Zn(2+) serves as cofactor.

It catalyses the reaction Endonucleolytic cleavage to 5'-phosphooligonucleotide end-products.. In terms of biological role, endonuclease IV plays a role in DNA repair. It cleaves phosphodiester bonds at apurinic or apyrimidinic (AP) sites, generating a 3'-hydroxyl group and a 5'-terminal sugar phosphate. The chain is Probable endonuclease 4 from Salmonella paratyphi A (strain AKU_12601).